The chain runs to 201 residues: Recombination protein RecR (201 aa).

The segment at 57–72 adopts a C4-type zinc-finger fold; sequence CADCRTFTEQDICTIC. One can recognise a Toprim domain in the interval 81–176; it reads GQICVVESPA…VASRIAHGVP (96 aa).

This sequence belongs to the RecR family.

In terms of biological role, may play a role in DNA repair. It seems to be involved in an RecBC-independent recombinational process of DNA repair. It may act with RecF and RecO. The protein is Recombination protein RecR of Serratia proteamaculans (strain 568).